The following is a 192-amino-acid chain: Ribosome maturation factor RimM (192 aa).

A PRC barrel domain is found at 116 to 192 (PGEYYWVDLI…RIIVDWQPDY (77 aa)).

Belongs to the RimM family. In terms of assembly, binds ribosomal protein uS19.

It is found in the cytoplasm. Functionally, an accessory protein needed during the final step in the assembly of 30S ribosomal subunit, possibly for assembly of the head region. Essential for efficient processing of 16S rRNA. May be needed both before and after RbfA during the maturation of 16S rRNA. It has affinity for free ribosomal 30S subunits but not for 70S ribosomes. In Verminephrobacter eiseniae (strain EF01-2), this protein is Ribosome maturation factor RimM.